We begin with the raw amino-acid sequence, 71 residues long: uncharacterized protein (71 aa).

This is an uncharacterized protein from Homo sapiens (Human).